We begin with the raw amino-acid sequence, 334 residues long: ADP-L-glycero-D-manno-heptose-6-epimerase (334 aa).

NADP(+)-binding positions include 11–12 (FI), 32–33 (DN), K39, K54, 77–81 (QGACS), and N94. Y141 functions as the Proton acceptor in the catalytic mechanism. K145 serves as a coordination point for NADP(+). Residue N171 coordinates substrate. The NADP(+) site is built by V172 and K180. K180 (proton acceptor) is an active-site residue. Residues R182, H189, 203–206 (FGSN), R216, and Y295 contribute to the substrate site.

The protein belongs to the NAD(P)-dependent epimerase/dehydratase family. HldD subfamily. Homopentamer. Requires NADP(+) as cofactor.

The enzyme catalyses ADP-D-glycero-beta-D-manno-heptose = ADP-L-glycero-beta-D-manno-heptose. It participates in nucleotide-sugar biosynthesis; ADP-L-glycero-beta-D-manno-heptose biosynthesis; ADP-L-glycero-beta-D-manno-heptose from D-glycero-beta-D-manno-heptose 7-phosphate: step 4/4. Its function is as follows. Catalyzes the interconversion between ADP-D-glycero-beta-D-manno-heptose and ADP-L-glycero-beta-D-manno-heptose via an epimerization at carbon 6 of the heptose. In Neisseria meningitidis serogroup C (strain 053442), this protein is ADP-L-glycero-D-manno-heptose-6-epimerase.